Consider the following 250-residue polypeptide: Phosphatidylglycerol--prolipoprotein diacylglyceryl transferase (250 aa).

4 consecutive transmembrane segments (helical) span residues 11–31 (LAIRWYGVIISIGAALGLLLA), 49–69 (FLIAFPSAIIGARLYYVIFEF), 84–104 (QGGLAIHGGIIFGVLAVYIYL), and 109–129 (ESFFEYVDVAAPSIILGQAIG). R130 contributes to the a 1,2-diacyl-sn-glycero-3-phospho-(1'-sn-glycerol) binding site. The next 3 helical transmembrane spans lie at 169-189 (PTFLYESIWNFIVCIFLVYLL), 196-216 (GIVFMAYIGLYSLGRFFIEGL), and 228-248 (VAQLISVLGIILSIFFIYNII).

Belongs to the Lgt family.

The protein localises to the cell membrane. It carries out the reaction L-cysteinyl-[prolipoprotein] + a 1,2-diacyl-sn-glycero-3-phospho-(1'-sn-glycerol) = an S-1,2-diacyl-sn-glyceryl-L-cysteinyl-[prolipoprotein] + sn-glycerol 1-phosphate + H(+). It functions in the pathway protein modification; lipoprotein biosynthesis (diacylglyceryl transfer). Functionally, catalyzes the transfer of the diacylglyceryl group from phosphatidylglycerol to the sulfhydryl group of the N-terminal cysteine of a prolipoprotein, the first step in the formation of mature lipoproteins. The chain is Phosphatidylglycerol--prolipoprotein diacylglyceryl transferase from Clostridium botulinum (strain 657 / Type Ba4).